A 238-amino-acid chain; its full sequence is Purine nucleoside phosphorylase DeoD-type (238 aa).

Position 4 (His-4) interacts with a purine D-ribonucleoside. Residues Gly-20, Arg-24, Arg-43, and 87-90 (RVGS) contribute to the phosphate site. A purine D-ribonucleoside is bound by residues 179 to 181 (EME) and 203 to 204 (SD). Asp-204 functions as the Proton donor in the catalytic mechanism.

Belongs to the PNP/UDP phosphorylase family. As to quaternary structure, homohexamer; trimer of homodimers.

The enzyme catalyses a purine D-ribonucleoside + phosphate = a purine nucleobase + alpha-D-ribose 1-phosphate. It catalyses the reaction a purine 2'-deoxy-D-ribonucleoside + phosphate = a purine nucleobase + 2-deoxy-alpha-D-ribose 1-phosphate. Catalyzes the reversible phosphorolytic breakdown of the N-glycosidic bond in the beta-(deoxy)ribonucleoside molecules, with the formation of the corresponding free purine bases and pentose-1-phosphate. The chain is Purine nucleoside phosphorylase DeoD-type from Histophilus somni (strain 129Pt) (Haemophilus somnus).